A 208-amino-acid polypeptide reads, in one-letter code: Putative archaetidylserine decarboxylase proenzyme (208 aa).

The Schiff-base intermediate with substrate; via pyruvic acid role is filled by serine 172. The residue at position 172 (serine 172) is a Pyruvic acid (Ser); by autocatalysis.

The protein belongs to the phosphatidylserine decarboxylase family. PSD-A subfamily. As to quaternary structure, heterodimer of a large membrane-associated beta subunit and a small pyruvoyl-containing alpha subunit. It depends on pyruvate as a cofactor. Is synthesized initially as an inactive proenzyme. Formation of the active enzyme involves a self-maturation process in which the active site pyruvoyl group is generated from an internal serine residue via an autocatalytic post-translational modification. Two non-identical subunits are generated from the proenzyme in this reaction, and the pyruvate is formed at the N-terminus of the alpha chain, which is derived from the carboxyl end of the proenzyme. The post-translation cleavage follows an unusual pathway, termed non-hydrolytic serinolysis, in which the side chain hydroxyl group of the serine supplies its oxygen atom to form the C-terminus of the beta chain, while the remainder of the serine residue undergoes an oxidative deamination to produce ammonia and the pyruvoyl prosthetic group on the alpha chain.

Its subcellular location is the cell membrane. It carries out the reaction archaetidylserine + H(+) = archaetidylethanolamine + CO2. Functionally, catalyzes the formation of archaetidylethanolamine (PtdEtn) from archaetidylserine (PtdSer). This Methanosarcina mazei (strain ATCC BAA-159 / DSM 3647 / Goe1 / Go1 / JCM 11833 / OCM 88) (Methanosarcina frisia) protein is Putative archaetidylserine decarboxylase proenzyme.